Reading from the N-terminus, the 132-residue chain is Phosphoribosyl-AMP cyclohydrolase (132 aa).

A Mg(2+)-binding site is contributed by Asp81. Residue Cys82 participates in Zn(2+) binding. Mg(2+) contacts are provided by Asp83 and Asp85. Positions 99 and 106 each coordinate Zn(2+).

The protein belongs to the PRA-CH family. Homodimer. It depends on Mg(2+) as a cofactor. Requires Zn(2+) as cofactor.

It localises to the cytoplasm. It carries out the reaction 1-(5-phospho-beta-D-ribosyl)-5'-AMP + H2O = 1-(5-phospho-beta-D-ribosyl)-5-[(5-phospho-beta-D-ribosylamino)methylideneamino]imidazole-4-carboxamide. It participates in amino-acid biosynthesis; L-histidine biosynthesis; L-histidine from 5-phospho-alpha-D-ribose 1-diphosphate: step 3/9. Functionally, catalyzes the hydrolysis of the adenine ring of phosphoribosyl-AMP. This is Phosphoribosyl-AMP cyclohydrolase from Chromobacterium violaceum (strain ATCC 12472 / DSM 30191 / JCM 1249 / CCUG 213 / NBRC 12614 / NCIMB 9131 / NCTC 9757 / MK).